Consider the following 953-residue polypeptide: uncharacterized protein (953 aa).

11 helical membrane-spanning segments follow: residues 23–43, 103–123, 148–168, 392–412, 435–455, 481–501, 540–560, 575–595, 599–619, 642–662, and 666–686; these read VVTS…AFLI, YLFI…PILL, GRYF…LYII, VSAI…VGMI, LLGL…MSFL, AYFA…SAAT, ISSG…LGAF, LSSM…VITF, IISP…YIAY, LFQT…LFAV, and WGPI…HLHL. Residues 910–953 form a disordered region; that stretch reads VPPPYNDVKDEANGEANGEFDTASKENNPFADPKYKEEESRSAV. Over residues 942–953 the composition is skewed to basic and acidic residues; sequence PKYKEEESRSAV. A Phosphoserine modification is found at serine 949.

This sequence belongs to the CSC1 (TC 1.A.17) family.

The protein resides in the membrane. In terms of biological role, acts as an osmosensitive calcium-permeable cation channel. This is an uncharacterized protein from Saccharomyces cerevisiae (strain ATCC 204508 / S288c) (Baker's yeast).